A 484-amino-acid polypeptide reads, in one-letter code: tRNA-2-methylthio-N(6)-dimethylallyladenosine synthase (484 aa).

The MTTase N-terminal domain maps to 36–153; it reads GKLYIKTHGC…LPELIRARRE (118 aa). 6 residues coordinate [4Fe-4S] cluster: Cys45, Cys82, Cys116, Cys190, Cys194, and Cys197. One can recognise a Radical SAM core domain in the interval 176-415; the sequence is RAEGPSAFVS…HISAHAASIS (240 aa). The TRAM domain occupies 416-479; sequence QSMVGSVQRV…SNSLRGRIQL (64 aa). Residues 428–450 are disordered; the sequence is EGPSRRDPNELTGKSENMRPVNF.

Belongs to the methylthiotransferase family. MiaB subfamily. As to quaternary structure, monomer. The cofactor is [4Fe-4S] cluster.

It is found in the cytoplasm. The enzyme catalyses N(6)-dimethylallyladenosine(37) in tRNA + (sulfur carrier)-SH + AH2 + 2 S-adenosyl-L-methionine = 2-methylsulfanyl-N(6)-dimethylallyladenosine(37) in tRNA + (sulfur carrier)-H + 5'-deoxyadenosine + L-methionine + A + S-adenosyl-L-homocysteine + 2 H(+). Its function is as follows. Catalyzes the methylthiolation of N6-(dimethylallyl)adenosine (i(6)A), leading to the formation of 2-methylthio-N6-(dimethylallyl)adenosine (ms(2)i(6)A) at position 37 in tRNAs that read codons beginning with uridine. The chain is tRNA-2-methylthio-N(6)-dimethylallyladenosine synthase from Xanthomonas oryzae pv. oryzae (strain MAFF 311018).